A 661-amino-acid polypeptide reads, in one-letter code: Probable urea active transporter 3 (661 aa).

The next 15 helical transmembrane spans lie at 13–33, 56–76, 86–106, 132–152, 165–185, 197–217, 251–271, 288–308, 352–372, 397–417, 419–439, 454–474, 495–515, 556–576, and 591–611; these read GIVIGLGFAFAIVMILVTYVL, GLISSAVVSSWTWPGTLLTSA, GSMWYSFAFTVQITFFTVIAL, AVFLFYALGTNIIVSAMLLLG, VVAAGFLLPLGVWLYTVSGGL, VIVYIVILITLFVAYTSSVHI, AVFVGWNIVIGGFATVFCDPS, YFAGGLAWLIVPWAMGSAAAL, AGVLILFMASTSATSAELVAF, VTHVFVTIFAVCMGALAVLFN, IGITISWIITFIGIALGPAVF, GMIIGCPMGSITGVVCWVGSC, VGNFTGLFSGLIYIVLISYFF, IGIFVSWIIFFILVIIVPLPM, and WIIVIIIWTLIAALYITFYPL.

It belongs to the sodium:solute symporter (SSF) (TC 2.A.21) family.

The protein localises to the membrane. It localises to the golgi apparatus membrane. In terms of biological role, involved in active transport of urea. The chain is Probable urea active transporter 3 (dur3-3) from Schizosaccharomyces pombe (strain 972 / ATCC 24843) (Fission yeast).